Consider the following 103-residue polypeptide: Serine rich endogenous peptide 9 (103 aa).

The N-terminal stretch at 1 to 25 is a signal peptide; the sequence is MENIFFSKLTQVFIVALLCIFIYRT. Positions 54-103 are disordered; sequence IYVKPPPLKSKDSNQKGKRGETYYKPNSEIGTGPSHSGHGGSSIEHVSSP. Residues 62–75 are compositionally biased toward basic and acidic residues; the sequence is KSKDSNQKGKRGET. The SCOOP motif signature appears at 82–96; that stretch reads EIGTGPSHSGHGGSS. A compositionally biased stretch (low complexity) spans 84–103; the sequence is GTGPSHSGHGGSSIEHVSSP. A SxS motif essential for MIK2 binding motif is present at residues 88–90; the sequence is SHS.

It belongs to the serine rich endogenous peptide (SCOOP) phytocytokine family. Interacts with MIK2 (via extracellular leucine-rich repeat domain); this interaction triggers the formation of complex between MIK2 and the BAK1/SERK3 and SERK4 coreceptors, and subsequent BAK1 activation by phosphorylation. As to expression, mostly expressed in seedlings shoots and roots, and, to a lower extent, in leaves, but barely in flowers.

Its subcellular location is the cell membrane. It is found in the secreted. It localises to the extracellular space. The protein localises to the apoplast. Functionally, brassicaceae-specific phytocytokine (plant endogenous peptide released into the apoplast) perceived by MIK2 in a BAK1/SERK3 and SERK4 coreceptors-dependent manner, that modulates various physiological and antimicrobial processes including growth prevention and reactive oxygen species (ROS) response regulation. The sequence is that of Serine rich endogenous peptide 9 from Arabidopsis thaliana (Mouse-ear cress).